Consider the following 93-residue polypeptide: UPF0367 protein tsr0804 (93 aa).

This sequence belongs to the UPF0367 family.

The chain is UPF0367 protein tsr0804 from Thermosynechococcus vestitus (strain NIES-2133 / IAM M-273 / BP-1).